Reading from the N-terminus, the 336-residue chain is IgLON family member 5 (336 aa).

Positions 1–30 (MPPPAPGARLRLLAAAALAGLAVISRGLLS) are cleaved as a signal peptide. 3 consecutive Ig-like C2-type domains span residues 33-122 (LEFN…QPYT), 132-217 (PARI…VNYP), and 218-307 (PTIT…MRLL). N-linked (GlcNAc...) asparagine glycosylation is found at Asn41, Asn49, Asn67, and Asn137. The cysteines at positions 54 and 112 are disulfide-linked. Cystine bridges form between Cys154-Cys195 and Cys238-Cys291. Asn288 carries N-linked (GlcNAc...) asparagine glycosylation.

It belongs to the immunoglobulin superfamily. IgLON family.

It localises to the secreted. The sequence is that of IgLON family member 5 (IGLON5) from Homo sapiens (Human).